We begin with the raw amino-acid sequence, 492 residues long: N-succinylglutamate 5-semialdehyde dehydrogenase (492 aa).

Residue 220–225 participates in NAD(+) binding; the sequence is GSANTG. Residues Glu-243 and Cys-277 contribute to the active site.

This sequence belongs to the aldehyde dehydrogenase family. AstD subfamily.

It carries out the reaction N-succinyl-L-glutamate 5-semialdehyde + NAD(+) + H2O = N-succinyl-L-glutamate + NADH + 2 H(+). Its pathway is amino-acid degradation; L-arginine degradation via AST pathway; L-glutamate and succinate from L-arginine: step 4/5. In terms of biological role, catalyzes the NAD-dependent reduction of succinylglutamate semialdehyde into succinylglutamate. The sequence is that of N-succinylglutamate 5-semialdehyde dehydrogenase from Escherichia coli O6:K15:H31 (strain 536 / UPEC).